The sequence spans 117 residues: Small ribosomal subunit protein bS16 (117 aa).

Over residues 81–90 the composition is skewed to basic residues; the sequence is LKKRPNRNNP. The interval 81 to 117 is disordered; it reads LKKRPNRNNPHKGQPGKKAQERISAAKQVAEAESAPV.

This sequence belongs to the bacterial ribosomal protein bS16 family.

In Bartonella quintana (strain Toulouse) (Rochalimaea quintana), this protein is Small ribosomal subunit protein bS16.